The primary structure comprises 814 residues: Flagellar radial spoke protein 1 (814 aa).

Arg-243 bears the Asymmetric dimethylarginine mark. Residues 283–346 form a disordered region; it reads VQSISTGNRE…PPPPAPKVDP (64 aa). The span at 303-329 shows a compositional bias: acidic residues; sequence PEEDEEEEKEEEKEEPEEGEEGEEGEG. Arg-428 carries the post-translational modification Asymmetric dimethylarginine. MORN repeat units follow at residues 577 to 597, 600 to 622, 623 to 645, 646 to 662, 671 to 685, and 691 to 707; these read YFGS…FATG, YAGE…DGGT, YVGE…DGSV, YTGS…GVYW, GEWK…GTYE, and FEGE…ATYT. The disordered stretch occupies residues 739-769; that stretch reads GIPPGSGDEPQLDEEGQPIEDTDKPPLPAHP. A compositionally biased stretch (acidic residues) spans 748–758; sequence PQLDEEGQPIE.

Asymmetrically dimethylated at Arg-243 and Arg-428 during flagellum resorption. Probably methylated by PRMT1.

It localises to the cytoplasm. The protein resides in the cytoskeleton. Its subcellular location is the flagellum axoneme. In terms of biological role, flagellar radial spokes contribute to the regulation of dynein arm activity and thus the pattern of flagellar bending. They consist of a thin stalk, which is attached to the a subfiber of the outer doublet microtubule, and a bulbous head, which is attached to the stalk and appears to interact with the projections from the central pair of microtubules. The chain is Flagellar radial spoke protein 1 from Chlamydomonas reinhardtii (Chlamydomonas smithii).